The following is a 1412-amino-acid chain: DNA-directed RNA polymerase subunit beta' (1412 aa).

Residues Asp543, Asp545, and Asp547 each contribute to the Mg(2+) site. Cys1017, Cys1092, Cys1099, and Cys1102 together coordinate Zn(2+).

This sequence belongs to the RNA polymerase beta' chain family. In terms of assembly, the RNAP catalytic core consists of 2 alpha, 1 beta, 1 beta' and 1 omega subunit. When a sigma factor is associated with the core the holoenzyme is formed, which can initiate transcription. Requires Mg(2+) as cofactor. It depends on Zn(2+) as a cofactor.

It catalyses the reaction RNA(n) + a ribonucleoside 5'-triphosphate = RNA(n+1) + diphosphate. In terms of biological role, DNA-dependent RNA polymerase catalyzes the transcription of DNA into RNA using the four ribonucleoside triphosphates as substrates. This is DNA-directed RNA polymerase subunit beta' from Mesomycoplasma hyopneumoniae (strain 7448) (Mycoplasma hyopneumoniae).